A 188-amino-acid chain; its full sequence is MYNILKKSFYKQKSLDVASSLLGKMLLFNQHKGIITETEAYIGQDDQAAHSFHGYTKRTAVMFGNPGFSYVYLIYGMYHCLNVVTEPEGFPAAILIRSIILLSKNTPHTKVNGPGKICKILDITKEHNNIDMTANHSFCICDTNLNIDDYICTPRIGISKATDKFWRFVIPDVTSLQYIDTKLVPTLT.

It belongs to the DNA glycosylase MPG family.

The chain is Putative 3-methyladenine DNA glycosylase from Ehrlichia ruminantium (strain Welgevonden).